We begin with the raw amino-acid sequence, 181 residues long: Probable nicotinate-nucleotide adenylyltransferase (181 aa).

Belongs to the NadD family.

It catalyses the reaction nicotinate beta-D-ribonucleotide + ATP + H(+) = deamido-NAD(+) + diphosphate. The protein operates within cofactor biosynthesis; NAD(+) biosynthesis; deamido-NAD(+) from nicotinate D-ribonucleotide: step 1/1. In terms of biological role, catalyzes the reversible adenylation of nicotinate mononucleotide (NaMN) to nicotinic acid adenine dinucleotide (NaAD). The polypeptide is Probable nicotinate-nucleotide adenylyltransferase (Campylobacter jejuni subsp. jejuni serotype O:6 (strain 81116 / NCTC 11828)).